Consider the following 479-residue polypeptide: ATP synthase subunit beta (479 aa).

Position 168–175 (168–175 (GGAGVGKT)) interacts with ATP.

The protein belongs to the ATPase alpha/beta chains family. As to quaternary structure, F-type ATPases have 2 components, CF(1) - the catalytic core - and CF(0) - the membrane proton channel. CF(1) has five subunits: alpha(3), beta(3), gamma(1), delta(1), epsilon(1). CF(0) has three main subunits: a(1), b(2) and c(9-12). The alpha and beta chains form an alternating ring which encloses part of the gamma chain. CF(1) is attached to CF(0) by a central stalk formed by the gamma and epsilon chains, while a peripheral stalk is formed by the delta and b chains.

The protein localises to the cell membrane. The catalysed reaction is ATP + H2O + 4 H(+)(in) = ADP + phosphate + 5 H(+)(out). Its function is as follows. Produces ATP from ADP in the presence of a proton gradient across the membrane. The catalytic sites are hosted primarily by the beta subunits. This is ATP synthase subunit beta from Parafrankia sp. (strain EAN1pec).